The primary structure comprises 631 residues: Transmembrane and coiled-coil domain-containing protein 4 (631 aa).

The disordered stretch occupies residues 1–26 (MATWNRPHPRLPVAPEPVAEGESQQP). Residues 153–183 (EEVFLESLKDAKEEESETAEESRKRKEKRRK) are a coiled coil. The next 4 membrane-spanning stretches (helical) occupy residues 187–203 (YLLIGLATVGGGTVIGV), 204–220 (TGGLAAPLVAAGAATII), 228–248 (LGSVAGIAVMTSLFGAAGAGL), and 343–363 (LSGIVAALTLPASLLSVANVI). The interval 523-631 (WSEKGLPLAP…ETQESCAELD (109 aa)) is disordered. Positions 571–590 (IPSSASQAQVPAGLDQSTED) are enriched in polar residues.

Belongs to the TMCO4 family.

It localises to the membrane. This chain is Transmembrane and coiled-coil domain-containing protein 4 (Tmco4), found in Rattus norvegicus (Rat).